The following is a 72-amino-acid chain: Penaeidin-2d (72 aa).

Residues 1–21 (MRLVVCLVFLASFALVCQGGA) form the signal peptide. At Q22 the chain carries Pyrrolidone carboxylic acid. Intrachain disulfides connect C45-C59, C48-C66, and C60-C67. Position 71 is a lysine amide (K71).

This sequence belongs to the penaeidin family.

It is found in the cytoplasmic granule. In terms of biological role, antibacterial and antifungal activity. Presents chitin-binding activity. This is Penaeidin-2d from Penaeus setiferus (Atlantic white shrimp).